The primary structure comprises 175 residues: DASH complex subunit DAM1 (175 aa).

The segment at 1 to 39 is disordered; the sequence is MAPEDTNPQSSHRRTRSTSRSRPTTPLRPSSRSSFRSSA. Residues 20-39 show a composition bias toward low complexity; it reads RSRPTTPLRPSSRSSFRSSA.

The protein belongs to the DASH complex DAM1 family. Component of the DASH complex consisting of ASK1, DAD1, DAD2, DAD3, DAD4, DAM1, DUO1, HSK3, SPC19 and SPC34, with a stoichiometry of one copy of each subunit per complex. Multiple DASH complexes oligomerize to form a ring that encircles spindle microtubules and organizes the rod-like NDC80 complexes of the outer kinetochore. DASH complex oligomerization strengthens microtubule attachments. On cytoplasmic microtubules, DASH complexes appear to form patches instead of rings.

It is found in the chromosome. The protein localises to the centromere. It localises to the kinetochore. The protein resides in the cytoplasm. Its subcellular location is the cytoskeleton. It is found in the spindle. The protein localises to the nucleus. Component of the DASH complex that connects microtubules with kinetochores and couples microtubule depolymerisation to chromosome movement; it is involved in retrieving kinetochores to the spindle poles before their re-orientation on the spindle in early mitosis and allows microtubule depolymerization to pull chromosomes apart and resist detachment during anaphase. Kinetochores, consisting of a centromere-associated inner segment and a microtubule-contacting outer segment, play a crucial role in chromosome segregation by mediating the physical connection between centromeric DNA and microtubules. Kinetochores also serve as an input point for the spindle assembly checkpoint, which delays anaphase until all chromosomes have bioriented on the mitotic spindle. This chain is DASH complex subunit DAM1, found in Chaetomium thermophilum (strain DSM 1495 / CBS 144.50 / IMI 039719) (Thermochaetoides thermophila).